Reading from the N-terminus, the 469-residue chain is Aspartyl/glutamyl-tRNA(Asn/Gln) amidotransferase subunit B (469 aa).

It belongs to the GatB/GatE family. GatB subfamily. Heterotrimer of A, B and C subunits.

The catalysed reaction is L-glutamyl-tRNA(Gln) + L-glutamine + ATP + H2O = L-glutaminyl-tRNA(Gln) + L-glutamate + ADP + phosphate + H(+). The enzyme catalyses L-aspartyl-tRNA(Asn) + L-glutamine + ATP + H2O = L-asparaginyl-tRNA(Asn) + L-glutamate + ADP + phosphate + 2 H(+). In terms of biological role, allows the formation of correctly charged Asn-tRNA(Asn) or Gln-tRNA(Gln) through the transamidation of misacylated Asp-tRNA(Asn) or Glu-tRNA(Gln) in organisms which lack either or both of asparaginyl-tRNA or glutaminyl-tRNA synthetases. The reaction takes place in the presence of glutamine and ATP through an activated phospho-Asp-tRNA(Asn) or phospho-Glu-tRNA(Gln). This chain is Aspartyl/glutamyl-tRNA(Asn/Gln) amidotransferase subunit B, found in Thermus thermophilus (strain ATCC BAA-163 / DSM 7039 / HB27).